The primary structure comprises 286 residues: Ribosome maturation factor RimP (286 aa).

Over residues 200–224 the composition is skewed to acidic residues; that stretch reads LDGEDGDDTGVDAGDPDQDDADDAL. The interval 200–286 is disordered; the sequence is LDGEDGDDTG…ANASTVKETH (87 aa). A compositionally biased stretch (basic residues) spans 248–267; the sequence is VGRKAKGKKASPKKSNAKKK. Polar residues predominate over residues 273-286; it reads AASSANASTVKETH.

The protein belongs to the RimP family.

The protein localises to the cytoplasm. Its function is as follows. Required for maturation of 30S ribosomal subunits. In Xanthobacter autotrophicus (strain ATCC BAA-1158 / Py2), this protein is Ribosome maturation factor RimP.